Consider the following 408-residue polypeptide: Succinylornithine transaminase (408 aa).

N6-(pyridoxal phosphate)lysine is present on lysine 252.

It belongs to the class-III pyridoxal-phosphate-dependent aminotransferase family. AstC subfamily. It depends on pyridoxal 5'-phosphate as a cofactor.

It carries out the reaction N(2)-succinyl-L-ornithine + 2-oxoglutarate = N-succinyl-L-glutamate 5-semialdehyde + L-glutamate. It functions in the pathway amino-acid degradation; L-arginine degradation via AST pathway; L-glutamate and succinate from L-arginine: step 3/5. Its function is as follows. Catalyzes the transamination of N(2)-succinylornithine and alpha-ketoglutarate into N(2)-succinylglutamate semialdehyde and glutamate. Can also act as an acetylornithine aminotransferase. The sequence is that of Succinylornithine transaminase from Salmonella typhi.